Consider the following 62-residue polypeptide: Photosystem II reaction center protein Z (62 aa).

The next 2 helical transmembrane spans lie at 8-28 (AVFA…VVFA) and 41-61 (FSGT…NSLI).

It belongs to the PsbZ family. As to quaternary structure, PSII is composed of 1 copy each of membrane proteins PsbA, PsbB, PsbC, PsbD, PsbE, PsbF, PsbH, PsbI, PsbJ, PsbK, PsbL, PsbM, PsbT, PsbY, PsbZ, Psb30/Ycf12, at least 3 peripheral proteins of the oxygen-evolving complex and a large number of cofactors. It forms dimeric complexes.

The protein resides in the plastid. Its subcellular location is the chloroplast thylakoid membrane. Its function is as follows. May control the interaction of photosystem II (PSII) cores with the light-harvesting antenna, regulates electron flow through the 2 photosystem reaction centers. PSII is a light-driven water plastoquinone oxidoreductase, using light energy to abstract electrons from H(2)O, generating a proton gradient subsequently used for ATP formation. This chain is Photosystem II reaction center protein Z, found in Calycanthus floridus var. glaucus (Eastern sweetshrub).